A 252-amino-acid polypeptide reads, in one-letter code: Triosephosphate isomerase (252 aa).

10–12 (NWK) is a binding site for substrate. Catalysis depends on His96, which acts as the Electrophile. Glu168 serves as the catalytic Proton acceptor. Substrate contacts are provided by residues Gly174, Ser213, and 234-235 (GG).

It belongs to the triosephosphate isomerase family. In terms of assembly, homodimer.

The protein resides in the cytoplasm. It carries out the reaction D-glyceraldehyde 3-phosphate = dihydroxyacetone phosphate. It participates in carbohydrate biosynthesis; gluconeogenesis. It functions in the pathway carbohydrate degradation; glycolysis; D-glyceraldehyde 3-phosphate from glycerone phosphate: step 1/1. Functionally, involved in the gluconeogenesis. Catalyzes stereospecifically the conversion of dihydroxyacetone phosphate (DHAP) to D-glyceraldehyde-3-phosphate (G3P). The polypeptide is Triosephosphate isomerase (Nitrosomonas europaea (strain ATCC 19718 / CIP 103999 / KCTC 2705 / NBRC 14298)).